Reading from the N-terminus, the 501-residue chain is Membrane-bound lytic murein transglycosylase F (501 aa).

A signal peptide spans 1-29 (MTKILLNTASTVLTRLWKLSLLGLVFAVA). Positions 30 to 274 (AATLVSSRIP…DAMETFYGHL (245 aa)) are non-LT domain. Positions 275–501 (GEIDYSGAIL…VKSISGTSSL (227 aa)) are LT domain. Glutamate 321 is an active-site residue.

In the N-terminal section; belongs to the bacterial solute-binding protein 3 family. The protein in the C-terminal section; belongs to the transglycosylase Slt family.

The protein resides in the cell outer membrane. The catalysed reaction is Exolytic cleavage of the (1-&gt;4)-beta-glycosidic linkage between N-acetylmuramic acid (MurNAc) and N-acetylglucosamine (GlcNAc) residues in peptidoglycan, from either the reducing or the non-reducing ends of the peptidoglycan chains, with concomitant formation of a 1,6-anhydrobond in the MurNAc residue.. Murein-degrading enzyme that degrades murein glycan strands and insoluble, high-molecular weight murein sacculi, with the concomitant formation of a 1,6-anhydromuramoyl product. Lytic transglycosylases (LTs) play an integral role in the metabolism of the peptidoglycan (PG) sacculus. Their lytic action creates space within the PG sacculus to allow for its expansion as well as for the insertion of various structures such as secretion systems and flagella. This chain is Membrane-bound lytic murein transglycosylase F, found in Saccharophagus degradans (strain 2-40 / ATCC 43961 / DSM 17024).